The chain runs to 173 residues: NADH-quinone oxidoreductase subunit B 1 (173 aa).

Residues Cys42, Cys43, Cys107, and Cys137 each coordinate [4Fe-4S] cluster.

Belongs to the complex I 20 kDa subunit family. NDH-1 is composed of 14 different subunits. Subunits NuoB, C, D, E, F, and G constitute the peripheral sector of the complex. It depends on [4Fe-4S] cluster as a cofactor.

The protein resides in the cell inner membrane. It carries out the reaction a quinone + NADH + 5 H(+)(in) = a quinol + NAD(+) + 4 H(+)(out). Functionally, NDH-1 shuttles electrons from NADH, via FMN and iron-sulfur (Fe-S) centers, to quinones in the respiratory chain. The immediate electron acceptor for the enzyme in this species is believed to be ubiquinone. Couples the redox reaction to proton translocation (for every two electrons transferred, four hydrogen ions are translocated across the cytoplasmic membrane), and thus conserves the redox energy in a proton gradient. In Anaeromyxobacter sp. (strain K), this protein is NADH-quinone oxidoreductase subunit B 1.